A 596-amino-acid chain; its full sequence is Ulvan-active sulfatase (596 aa).

The first 27 residues, 1–27, serve as a signal peptide directing secretion; that stretch reads MLFLRFKFFNNRLLFVSVLCFVICVSC. Residues Glu58, Asp59, Cys97, Asp306, and His307 each coordinate Ca(2+). Cys97 (nucleophile) is an active-site residue. The residue at position 97 (Cys97) is a 3-oxoalanine (Cys).

It belongs to the sulfatase family. It depends on Ca(2+) as a cofactor. The conversion to 3-oxoalanine (also known as C-formylglycine, FGly), of a serine or cysteine residue in prokaryotes and of a cysteine residue in eukaryotes, is critical for catalytic activity.

The protein resides in the periplasm. Sulfatase involved in ulvan degradation. Ulvan is the main polysaccharide component of the Ulvales (green seaweed) cell wall. It is composed of disaccharide building blocks comprising 3-sulfated rhamnose (Rha3S) linked to D-glucuronic acid (GlcA), L-iduronic acid (IduA), or D-xylose (Xyl). The sulfatase desulfates Xyl2S-Rha3S, product of the degradation of ulvan by endo-acting alpha-1,4-L-rhamnosidase, to Xyl-Rha3S. The chain is Ulvan-active sulfatase from Formosa agariphila (strain DSM 15362 / KCTC 12365 / LMG 23005 / KMM 3901 / M-2Alg 35-1).